A 206-amino-acid polypeptide reads, in one-letter code: Pro-glucagon (206 aa).

An N-terminal signal peptide occupies residues 1–22 (MKMKSIYFIAGLLLMIVQGSWQ). Residues 27-57 (DTEEKSRSFKASQSEPLDESRQLNEVKRHSQ) form a disordered region. Basic and acidic residues predominate over residues 44–54 (DESRQLNEVKR). Positions 86 to 109 (NGQQGQEDKENDKFPDQLSSNAIS) are excised as a propeptide. Arginine 147 is modified (arginine amide). 2 consecutive propeptides follow at residues 151 to 163 (DFPE…EEMG) and 199 to 206 (RDLLGEYQ).

It belongs to the glucagon family. Proglucagon is post-translationally processed in a tissue-specific manner in pancreatic A cells and intestinal L cells. In pancreatic A cells, the major bioactive hormone is glucagon cleaved by PCSK2/PC2. In the intestinal L cells PCSK1/PC1 liberates GLP-1 and GLP-2. GLP-1 is further N-terminally truncated by post-translational processing in the intestinal L cells resulting in GLP-1(7-37) GLP-1-(7-36)amide.

It is found in the secreted. Functionally, plays a key role in glucose metabolism and homeostasis. Regulates blood glucose by increasing gluconeogenesis and decreasing glycolysis. Potent stimulator of glucose-dependent insulin release. Plays important roles on gastric motility and the suppression of plasma glucagon levels. May be involved in the suppression of satiety and stimulation of glucose disposal in peripheral tissues, independent of the actions of insulin. Has growth-promoting activities on intestinal epithelium. May also regulate the hypothalamic pituitary axis (HPA) via effects on LH, TSH, CRH, oxytocin, and vasopressin secretion. Increases islet mass through stimulation of islet neogenesis and pancreatic beta cell proliferation. Its function is as follows. Stimulates intestinal growth and up-regulates villus height in the small intestine, concomitant with increased crypt cell proliferation and decreased enterocyte apoptosis. The gastrointestinal tract, from the stomach to the colon is the principal target for GLP-2 action. Plays a key role in nutrient homeostasis, enhancing nutrient assimilation through enhanced gastrointestinal function, as well as increasing nutrient disposal. Stimulates intestinal glucose transport and decreases mucosal permeability. The sequence is that of Pro-glucagon (GCG) from Gallus gallus (Chicken).